The sequence spans 376 residues: Glutamate 5-kinase (376 aa).

Residue Lys15 coordinates ATP. Ser56, Asp143, and Asn155 together coordinate substrate. ATP is bound at residue 175 to 176 (SD). The PUA domain maps to 281 to 358 (KGTLTIDAGA…PDVMSILGIT (78 aa)).

It belongs to the glutamate 5-kinase family.

It localises to the cytoplasm. It carries out the reaction L-glutamate + ATP = L-glutamyl 5-phosphate + ADP. The protein operates within amino-acid biosynthesis; L-proline biosynthesis; L-glutamate 5-semialdehyde from L-glutamate: step 1/2. In terms of biological role, catalyzes the transfer of a phosphate group to glutamate to form L-glutamate 5-phosphate. The chain is Glutamate 5-kinase from Rhodopseudomonas palustris (strain BisB18).